Here is a 126-residue protein sequence, read N- to C-terminus: MPEPVKSAPVPKKGSKKAINKAQKKDGKKRKRSRKESYSVYVYKVLKQVHPDTGISSKAMGIMNSFVNDIFERIAGEASRLAHYNKRSTITSREIQTAVRLLLPGELAKHAVSEGTKAVTKYTSSK.

A disordered region spans residues 1-36 (MPEPVKSAPVPKKGSKKAINKAQKKDGKKRKRSRKE). Residue Pro-2 is modified to N-acetylproline. ADP-ribosyl glutamic acid is present on Glu-3. The residue at position 6 (Lys-6) is an N6-(2-hydroxyisobutyryl)lysine; alternate. Lys-6 bears the N6-(beta-hydroxybutyryl)lysine; alternate mark. Lys-6 carries the N6-acetyllysine; alternate modification. Lys-6 bears the N6-butyryllysine; alternate mark. An N6-crotonyllysine; alternate modification is found at Lys-6. The residue at position 6 (Lys-6) is an N6-lactoyllysine; alternate. Lys-6 is covalently cross-linked (Glycyl lysine isopeptide (Lys-Gly) (interchain with G-Cter in SUMO2); alternate). Ser-7 bears the ADP-ribosylserine mark. N6-(beta-hydroxybutyryl)lysine; alternate is present on Lys-12. Residues Lys-12 and Lys-13 each carry the N6-acetyllysine; alternate modification. Residues Lys-12 and Lys-13 each carry the N6-crotonyllysine; alternate modification. Position 12 is an N6-lactoyllysine; alternate (Lys-12). Position 13 is an N6-(2-hydroxyisobutyryl)lysine; alternate (Lys-13). Ser-15 is subject to Phosphoserine; by STK4/MST1. N6-acetyllysine; alternate is present on residues Lys-16, Lys-17, Lys-21, and Lys-24. An N6-crotonyllysine; alternate mark is found at Lys-16, Lys-17, Lys-21, and Lys-24. Lys-16, Lys-17, Lys-21, and Lys-24 each carry N6-lactoyllysine; alternate. 2 positions are modified to N6-(beta-hydroxybutyryl)lysine; alternate: Lys-17 and Lys-21. Lys-17 carries the N6-glutaryllysine; alternate modification. Residues Lys-21 and Lys-24 each carry the N6-(2-hydroxyisobutyryl)lysine; alternate modification. An N6-butyryllysine; alternate modification is found at Lys-21. A Glycyl lysine isopeptide (Lys-Gly) (interchain with G-Cter in SUMO2); alternate cross-link involves residue Lys-21. An N6-(2-hydroxyisobutyryl)lysine modification is found at Lys-25. Lys-35 bears the N6-(2-hydroxyisobutyryl)lysine; alternate mark. Lys-35 bears the N6-(beta-hydroxybutyryl)lysine; alternate mark. At Lys-35 the chain carries N6-crotonyllysine; alternate. An N6-glutaryllysine; alternate modification is found at Lys-35. The residue at position 35 (Lys-35) is an N6-succinyllysine; alternate. A Glycyl lysine isopeptide (Lys-Gly) (interchain with G-Cter in ubiquitin); alternate cross-link involves residue Lys-35. A PolyADP-ribosyl glutamic acid modification is found at Glu-36. A Phosphoserine; by AMPK modification is found at Ser-37. N6-(2-hydroxyisobutyryl)lysine; alternate is present on residues Lys-44, Lys-47, and Lys-58. Lys-44 carries the post-translational modification N6-lactoyllysine; alternate. N6-glutaryllysine; alternate is present on residues Lys-44 and Lys-47. Lys-47 carries the N6-methyllysine; alternate modification. N6,N6-dimethyllysine; alternate is present on Lys-58. A Dimethylated arginine modification is found at Arg-80. An N6-(2-hydroxyisobutyryl)lysine; alternate modification is found at Lys-86. An N6-(beta-hydroxybutyryl)lysine; alternate modification is found at Lys-86. Residue Lys-86 is modified to N6-acetyllysine; alternate. Lys-86 is modified (N6-lactoyllysine; alternate). Lys-86 is modified (N6,N6,N6-trimethyllysine; alternate). Omega-N-methylarginine is present on residues Arg-87 and Arg-93. Lys-109 carries the N6-(2-hydroxyisobutyryl)lysine; alternate modification. Lys-109 bears the N6-lactoyllysine; alternate mark. Residue Lys-109 is modified to N6-glutaryllysine; alternate. At Lys-109 the chain carries N6-methyllysine; alternate. O-linked (GlcNAc) serine glycosylation is present at Ser-113. At Thr-116 the chain carries Phosphothreonine. An N6-(2-hydroxyisobutyryl)lysine; alternate mark is found at Lys-117 and Lys-121. N6-(beta-hydroxybutyryl)lysine; alternate is present on residues Lys-117 and Lys-121. N6-lactoyllysine; alternate occurs at positions 117 and 121. Lys-117 and Lys-121 each carry N6-glutaryllysine; alternate. Lys-117 and Lys-121 each carry N6-succinyllysine; alternate. Lys-117 carries the N6-malonyllysine; alternate modification. Lys-117 carries the N6-methylated lysine; alternate modification. Residue Lys-121 forms a Glycyl lysine isopeptide (Lys-Gly) (interchain with G-Cter in ubiquitin); alternate linkage.

The protein belongs to the histone H2B family. In terms of assembly, the nucleosome is a histone octamer containing two molecules each of H2A, H2B, H3 and H4 assembled in one H3-H4 heterotetramer and two H2A-H2B heterodimers. The octamer wraps approximately 147 bp of DNA. Post-translationally, monoubiquitination at Lys-35 (H2BK34Ub) by the MSL1/MSL2 dimer is required for histone H3 'Lys-4' (H3K4me) and 'Lys-79' (H3K79me) methylation and transcription activation at specific gene loci, such as HOXA9 and MEIS1 loci. Similarly, monoubiquitination at Lys-121 (H2BK120Ub) by the RNF20/40 complex gives a specific tag for epigenetic transcriptional activation and is also prerequisite for histone H3 'Lys-4' and 'Lys-79' methylation. It also functions cooperatively with the FACT dimer to stimulate elongation by RNA polymerase II. H2BK120Ub also acts as a regulator of mRNA splicing: deubiquitination by USP49 is required for efficient cotranscriptional splicing of a large set of exons. Phosphorylation at Ser-37 (H2BS36ph) by AMPK in response to stress promotes transcription. Phosphorylated on Ser-15 (H2BS14ph) by STK4/MST1 during apoptosis; which facilitates apoptotic chromatin condensation. Also phosphorylated on Ser-15 in response to DNA double strand breaks (DSBs), and in correlation with somatic hypermutation and immunoglobulin class-switch recombination. In terms of processing, glcNAcylation at Ser-113 promotes monoubiquitination of Lys-121. It fluctuates in response to extracellular glucose, and associates with transcribed genes. Post-translationally, ADP-ribosylated by PARP1 or PARP2 on Ser-7 (H2BS6ADPr) in response to DNA damage. H2BS6ADPr promotes recruitment of CHD1L. Mono-ADP-ribosylated on Glu-3 (H2BE2ADPr) by PARP3 in response to single-strand breaks. Poly ADP-ribosylation on Glu-36 (H2BE35ADPr) by PARP1 regulates adipogenesis: it inhibits phosphorylation at Ser-37 (H2BS36ph), thereby blocking expression of pro-adipogenetic genes. Crotonylation (Kcr) is specifically present in male germ cells and marks testis-specific genes in post-meiotic cells, including X-linked genes that escape sex chromosome inactivation in haploid cells. Crotonylation marks active promoters and enhancers and confers resistance to transcriptional repressors. It is also associated with post-meiotically activated genes on autosomes. In terms of processing, lactylated in macrophages by EP300/P300 by using lactoyl-CoA directly derived from endogenous or exogenous lactate, leading to stimulates gene transcription.

The protein resides in the nucleus. It is found in the chromosome. Its function is as follows. Core component of nucleosome. Nucleosomes wrap and compact DNA into chromatin, limiting DNA accessibility to the cellular machineries which require DNA as a template. Histones thereby play a central role in transcription regulation, DNA repair, DNA replication and chromosomal stability. DNA accessibility is regulated via a complex set of post-translational modifications of histones, also called histone code, and nucleosome remodeling. This is Histone H2B type 1-M from Homo sapiens (Human).